Here is a 170-residue protein sequence, read N- to C-terminus: Translationally-controlled tumor protein homolog (170 aa).

Positions 1 to 170 (MIIYKDLLSG…FKDGLEIEKC (170 aa)) constitute a TCTP domain.

Belongs to the TCTP family.

The protein resides in the cytoplasm. Its function is as follows. Involved in calcium binding and microtubule stabilization. The sequence is that of Translationally-controlled tumor protein homolog (tpt1) from Scophthalmus maximus (Turbot).